Reading from the N-terminus, the 265-residue chain is GTP cyclohydrolase FolE2 (265 aa).

Belongs to the GTP cyclohydrolase IV family.

The catalysed reaction is GTP + H2O = 7,8-dihydroneopterin 3'-triphosphate + formate + H(+). It participates in cofactor biosynthesis; 7,8-dihydroneopterin triphosphate biosynthesis; 7,8-dihydroneopterin triphosphate from GTP: step 1/1. Converts GTP to 7,8-dihydroneopterin triphosphate. The polypeptide is GTP cyclohydrolase FolE2 (Bordetella avium (strain 197N)).